Reading from the N-terminus, the 226-residue chain is MQITEIYRSLQGESSYTGIPCIFVRLTACNLRCAWCDSEYTFKGGRKMSEDEIFAEVQKLAPGGLVEITGGEPLLQERELVPFMERLVASGYKVLIETSGERPLANVPQDVVKIVDVKCPASGEGGSFRIENLDALTPHDEIKFVISDRADYEFAREFTRQHGLENKVSSVIFSPAFRKDARGTRDASHCLVDPQDLANWVLEDQLDVRLGLQTHKFIWTPETKGV.

Substrate contacts are provided by residues Leu-10 to Gly-12 and Arg-25. The 206-residue stretch at Tyr-16 to Pro-221 folds into the Radical SAM core domain. [4Fe-4S] cluster contacts are provided by Cys-29, Cys-33, and Cys-36. Residue Ser-38 coordinates Mg(2+). Residue Thr-69 coordinates substrate. Gly-71 provides a ligand contact to S-adenosyl-L-methionine.

It belongs to the radical SAM superfamily. 7-carboxy-7-deazaguanine synthase family. As to quaternary structure, homodimer. [4Fe-4S] cluster is required as a cofactor. It depends on S-adenosyl-L-methionine as a cofactor. Mg(2+) serves as cofactor.

The catalysed reaction is 6-carboxy-5,6,7,8-tetrahydropterin + H(+) = 7-carboxy-7-deazaguanine + NH4(+). Its pathway is purine metabolism; 7-cyano-7-deazaguanine biosynthesis. Catalyzes the complex heterocyclic radical-mediated conversion of 6-carboxy-5,6,7,8-tetrahydropterin (CPH4) to 7-carboxy-7-deazaguanine (CDG), a step common to the biosynthetic pathways of all 7-deazapurine-containing compounds. The sequence is that of 7-carboxy-7-deazaguanine synthase from Koribacter versatilis (strain Ellin345).